Reading from the N-terminus, the 285-residue chain is Ribonuclease H1 (285 aa).

The tract at residues 72–126 (RSSSSPDGSKGQESAHEQKSQAKTSKRPREPLGEGEELPEPGPKHTRQDTEPAAV) is disordered. An RNase H type-1 domain is found at 135 to 281 (MGESVIVYTD…ADRLAREGAK (147 aa)). Mg(2+) is bound by residues D144, E185, D209, and D273.

It belongs to the RNase H family. In terms of assembly, monomer. The cofactor is Mg(2+).

Its subcellular location is the cytoplasm. The catalysed reaction is Endonucleolytic cleavage to 5'-phosphomonoester.. In the presence of magnesium, manganese is inhibitory. In terms of biological role, endonuclease that specifically degrades the RNA of RNA-DNA hybrids. Plays a role in RNA polymerase II (RNAp II) transcription termination by degrading R-loop RNA-DNA hybrid formation at G-rich pause sites located downstream of the poly(A) site and behind the elongating RNAp II. The sequence is that of Ribonuclease H1 (Rnaseh1) from Mus musculus (Mouse).